Here is a 370-residue protein sequence, read N- to C-terminus: Vasopressin V2 receptor (370 aa).

Positions 1-10 are enriched in polar residues; sequence MLLASTTSAV. A disordered region spans residues 1–26; the sequence is MLLASTTSAVPRTLSPPTPAGNGSRE. Residues 1-37 are Extracellular-facing; the sequence is MLLASTTSAVPRTLSPPTPAGNGSRELLDTRDPLLVQ. Asparagine 22 carries an N-linked (GlcNAc...) asparagine glycan. The helical transmembrane segment at 38 to 62 threads the bilayer; sequence AELALLSTVFVAVALSNGLVLGALA. The Cytoplasmic segment spans residues 63–76; that stretch reads RRVRRGRWAPMHVF. The chain crosses the membrane as a helical span at residues 77–97; it reads IGHLCLADLAVALFQVLPQLA. The Extracellular portion of the chain corresponds to 98–112; it reads WDATDRFRGPDALCR. A helical transmembrane segment spans residues 113–134; that stretch reads AVKYLQMVGMYASSYMILAMTL. The Cytoplasmic portion of the chain corresponds to 135–158; sequence DRHRAICRPMLAYRHGGGARWNRP. Residues 159–179 traverse the membrane as a helical segment; it reads VLVAWAFSLILSLPQLFIFAQ. Residues 180 to 199 lie on the Extracellular side of the membrane; it reads RDVGNGSGVLDCWAHFAEPW. Residues 200–219 traverse the membrane as a helical segment; sequence GLRAYVTWIALMVFVAPALG. Topologically, residues 220–270 are cytoplasmic; sequence IAACQVLIFREIHSSLVPGPAERAGGCRGGHRTGSPSEGARVSAAMAKTVR. The chain crosses the membrane as a helical span at residues 271–292; it reads MTLVIVIVYVLCWAPFFLVQLW. Topologically, residues 293 to 307 are extracellular; that stretch reads AAWDPQAPLEGAPFV. A helical membrane pass occupies residues 308–327; it reads LLMLLASLNSCTNPWIYAFF. The Cytoplasmic portion of the chain corresponds to 328–370; that stretch reads SSSVSSELRSLFCWARSRAPPSLGPQEESCATASSFLAKDTSS. Cysteine 340 carries the S-palmitoyl cysteine lipid modification.

It belongs to the G-protein coupled receptor 1 family. Vasopressin/oxytocin receptor subfamily. As to quaternary structure, interacts with ARRDC4. Identified in a complex containing at least ARRDC4, V2R and HGS. Interacts with TMEM147.

Its subcellular location is the cell membrane. Receptor for arginine vasopressin. The activity of this receptor is mediated by G proteins which activate adenylate cyclase. Involved in renal water reabsorption. The protein is Vasopressin V2 receptor (AVPR2) of Canis lupus familiaris (Dog).